We begin with the raw amino-acid sequence, 80 residues long: Exodeoxyribonuclease 7 small subunit (80 aa).

It belongs to the XseB family. As to quaternary structure, heterooligomer composed of large and small subunits.

It is found in the cytoplasm. The catalysed reaction is Exonucleolytic cleavage in either 5'- to 3'- or 3'- to 5'-direction to yield nucleoside 5'-phosphates.. Functionally, bidirectionally degrades single-stranded DNA into large acid-insoluble oligonucleotides, which are then degraded further into small acid-soluble oligonucleotides. The protein is Exodeoxyribonuclease 7 small subunit of Vibrio cholerae serotype O1 (strain ATCC 39541 / Classical Ogawa 395 / O395).